Reading from the N-terminus, the 290-residue chain is uncharacterized protein (290 aa).

Disordered stretches follow at residues 105–156 and 259–290; these read LKHK…KLTV and EGAQRDRFPGRKQPGVHEEPVLKKWPKLKSKK. Residues 114–130 show a composition bias toward polar residues; that stretch reads KATQQARKRNFISSKSK. 2 stretches are compositionally biased toward basic and acidic residues: residues 143-156 and 261-280; these read RESKESSKEKKLTV and AQRDRFPGRKQPGVHEEPVL.

This is an uncharacterized protein from Homo sapiens (Human).